Consider the following 77-residue polypeptide: Acyl carrier protein (77 aa).

In terms of domain architecture, Carrier spans 2 to 77 (AEVLEKVTKI…DAVKYIEANA (76 aa)). S37 carries the O-(pantetheine 4'-phosphoryl)serine modification.

This sequence belongs to the acyl carrier protein (ACP) family. In terms of processing, 4'-phosphopantetheine is transferred from CoA to a specific serine of apo-ACP by AcpS. This modification is essential for activity because fatty acids are bound in thioester linkage to the sulfhydryl of the prosthetic group.

Its subcellular location is the cytoplasm. It functions in the pathway lipid metabolism; fatty acid biosynthesis. Functionally, carrier of the growing fatty acid chain in fatty acid biosynthesis. This is Acyl carrier protein from Listeria innocua serovar 6a (strain ATCC BAA-680 / CLIP 11262).